A 121-amino-acid chain; its full sequence is Large ribosomal subunit protein bL17 (121 aa).

The protein belongs to the bacterial ribosomal protein bL17 family. As to quaternary structure, part of the 50S ribosomal subunit. Contacts protein L32.

The protein is Large ribosomal subunit protein bL17 of Mycoplasmopsis agalactiae (strain NCTC 10123 / CIP 59.7 / PG2) (Mycoplasma agalactiae).